A 268-amino-acid chain; its full sequence is Norsolorinic acid ketoreductase nor1 (268 aa).

7 residues coordinate NADP(+): Ile32, Asp79, Asn108, Tyr182, Lys186, Val213, and Thr215. Tyr182 (proton donor) is an active-site residue. Lys186 acts as the Lowers pKa of active site Tyr in catalysis.

This sequence belongs to the short-chain dehydrogenases/reductases (SDR) family.

The protein resides in the cytoplasm. It localises to the cytosol. The protein localises to the vacuole. The catalysed reaction is (1'S)-averantin + NADP(+) = norsolorinic acid + NADPH + H(+). Its pathway is mycotoxin biosynthesis. Its function is as follows. Norsolorinic acid ketoreductase; part of the fragmented gene cluster that mediates the biosynthesis of dothistromin (DOTH), a polyketide toxin very similar in structure to the aflatoxin precursor, versicolorin B. The first step of the pathway is the conversion of acetate to norsolorinic acid (NOR) and requires the fatty acid synthase subunits hexA and hexB, as well as the polyketide synthase pksA. PksA combines a hexanoyl starter unit and 7 malonyl-CoA extender units to synthesize the precursor NOR. The hexanoyl starter unit is provided to the acyl-carrier protein (ACP) domain by the fungal fatty acid synthase hexA/hexB. The second step is the conversion of NOR to averantin (AVN) and requires the norsolorinic acid ketoreductase nor1, which catalyzes the dehydration of norsolorinic acid to form (1'S)-averantin. The cytochrome P450 monooxygenase avnA then catalyzes the hydroxylation of AVN to 5'hydroxyaverantin (HAVN). The next step is performed by adhA that transforms HAVN to averufin (AVF). Averufin might then be converted to hydroxyversicolorone by cypX and avfA. Hydroxyversicolorone is further converted versiconal hemiacetal acetate (VHA) by moxY. VHA is then the substrate for the versiconal hemiacetal acetate esterase est1 to yield versiconal (VAL). Versicolorin B synthase vbsA then converts VAL to versicolorin B (VERB) by closing the bisfuran ring. Then, the activity of the versicolorin B desaturase verB leads to versicolorin A (VERA). DotB, a predicted chloroperoxidase, may perform epoxidation of the A-ring of VERA. Alternatively, a cytochrome P450, such as cypX or avnA could catalyze this step. It is also possible that another, uncharacterized, cytochrome P450 enzyme is responsible for this step. Opening of the epoxide could potentially be achieved by the epoxide hydrolase epoA. However, epoA seems not to be required for DOTH biosynthesis, but other epoxide hydrolases may have the ability to complement this hydrolysis. Alternatively, opening of the epoxide ring could be achieved non-enzymatically. The next step is the deoxygenation of ring A to yield the 5,8-dihydroxyanthraquinone which is most likely catalyzed by the NADPH dehydrogenase encoded by ver1. The last stages of DOTH biosynthesis are proposed to involve hydroxylation of the bisfuran. OrdB and norB might have oxidative roles here. An alternative possibility is that cytochrome P450 monoogenases such as avnA and cypX might perform these steps in addition to previously proposed steps. This chain is Norsolorinic acid ketoreductase nor1, found in Dothistroma septosporum (strain NZE10 / CBS 128990) (Red band needle blight fungus).